The primary structure comprises 305 residues: UDP-N-acetylenolpyruvoylglucosamine reductase 2 (305 aa).

The 165-residue stretch at 33 to 197 (VGGKADVFVA…LEARFELEEG (165 aa)) folds into the FAD-binding PCMH-type domain. Arg176 is an active-site residue. Ser226 (proton donor) is an active-site residue. Glu296 is a catalytic residue.

This sequence belongs to the MurB family. It depends on FAD as a cofactor.

Its subcellular location is the cytoplasm. The enzyme catalyses UDP-N-acetyl-alpha-D-muramate + NADP(+) = UDP-N-acetyl-3-O-(1-carboxyvinyl)-alpha-D-glucosamine + NADPH + H(+). Its pathway is cell wall biogenesis; peptidoglycan biosynthesis. In terms of biological role, cell wall formation. This is UDP-N-acetylenolpyruvoylglucosamine reductase 2 from Bacillus cereus (strain ATCC 10987 / NRS 248).